The following is a 559-amino-acid chain: MSESFAELFEESLKSLDMQPGAIITGIVVDIDGDWVTVHAGLKSEGVIPVEQFYNEQGELTIKVGDEVHVALDAVEDGFGETKLSREKAKRAESWIVLEAAFAADEVVKGVINGKVKGGFTVDVNGIRAFLPGSLVDVRPVRDTTHLEGKELEFKVIKLDQKRNNVVVSRRSVLEAENSAEREALLESLQEGQQVKGIVKNLTDYGAFVDLGGVDGLLHITDMAWKRIKHPSEIVNVGDEIDVKVLKFDRERNRVSLGLKQLGEDPWVAIKARYPEGTRVMARVTNLTDYGCFAELEEGVEGLVHVSEMDWTNKNIHPSKVVQVGDEVEVQVLDIDEERRRISLGIKQCKSNPWEDFSSQFNKGDRISGTIKSITDFGIFIGLDGGIDGLVHLSDISWNEVGEEAVRRFKKGDELETVILSVDPERERISLGIKQLEDDPFSNYASLHEKGSIVRGTVKEVDAKGAVISLGDDIEGILKASEISRDRVEDARNVLKEGEEVEAKIISIDRKSRVISLSVKSKDVDDEKDAMKELRKQEVESAGPTTIGDLIRAQMENQG.

6 consecutive S1 motif domains span residues 21 to 87 (GAII…LSRE), 105 to 171 (DEVV…VSRR), 192 to 260 (GQQV…LGLK), 277 to 347 (GTRV…LGIK), 364 to 434 (GDRI…LGIK), and 451 to 520 (GSIV…LSVK).

This sequence belongs to the bacterial ribosomal protein bS1 family.

Binds mRNA; thus facilitating recognition of the initiation point. It is needed to translate mRNA with a short Shine-Dalgarno (SD) purine-rich sequence. The polypeptide is Small ribosomal subunit protein bS1 (rpsA) (Pseudomonas aeruginosa (strain ATCC 15692 / DSM 22644 / CIP 104116 / JCM 14847 / LMG 12228 / 1C / PRS 101 / PAO1)).